Here is a 479-residue protein sequence, read N- to C-terminus: Aspartyl/glutamyl-tRNA(Asn/Gln) amidotransferase subunit B (479 aa).

This sequence belongs to the GatB/GatE family. GatB subfamily. In terms of assembly, heterotrimer of A, B and C subunits.

It carries out the reaction L-glutamyl-tRNA(Gln) + L-glutamine + ATP + H2O = L-glutaminyl-tRNA(Gln) + L-glutamate + ADP + phosphate + H(+). The catalysed reaction is L-aspartyl-tRNA(Asn) + L-glutamine + ATP + H2O = L-asparaginyl-tRNA(Asn) + L-glutamate + ADP + phosphate + 2 H(+). In terms of biological role, allows the formation of correctly charged Asn-tRNA(Asn) or Gln-tRNA(Gln) through the transamidation of misacylated Asp-tRNA(Asn) or Glu-tRNA(Gln) in organisms which lack either or both of asparaginyl-tRNA or glutaminyl-tRNA synthetases. The reaction takes place in the presence of glutamine and ATP through an activated phospho-Asp-tRNA(Asn) or phospho-Glu-tRNA(Gln). The chain is Aspartyl/glutamyl-tRNA(Asn/Gln) amidotransferase subunit B from Geobacter sulfurreducens (strain ATCC 51573 / DSM 12127 / PCA).